The following is a 478-amino-acid chain: BTB/POZ domain-containing protein 17 (478 aa).

Positions 1–28 are cleaved as a signal peptide; that stretch reads MPRRGYSKPGSWGSFWAMLTLVGLVTHA. N-linked (GlcNAc...) asparagine glycans are attached at residues asparagine 61, asparagine 100, and asparagine 195. One can recognise a BTB domain in the interval 63–132; it reads SDVVLRVQAA…LYCGELTVLL (70 aa). The BACK domain maps to 169–269; it reads AVGWYHYAVG…IPPAQLFQLQ (101 aa).

It localises to the secreted. The sequence is that of BTB/POZ domain-containing protein 17 (BTBD17) from Homo sapiens (Human).